We begin with the raw amino-acid sequence, 250 residues long: Lymphotoxin-beta (250 aa).

The Cytoplasmic segment spans residues 1–26 (MGAPGLETRAGGPNGKSYLLLASVGA). The chain crosses the membrane as a helical; Signal-anchor for type II membrane protein span at residues 27–47 (AVLGTLLLSVPITVLTVLALM). Over 48–250 (PQEQGGQVAD…KTFFGAVMVG (203 aa)) the chain is Extracellular. A THD domain is found at 87–249 (PAAHLIGIAK…GKTFFGAVMV (163 aa)). Residue Asn228 is glycosylated (N-linked (GlcNAc...) asparagine).

The protein belongs to the tumor necrosis factor family. In terms of assembly, heterotrimer of either two LTB and one LTA subunits or (less prevalent) two LTA and one LTB subunits.

It localises to the membrane. Functionally, cytokine that binds to LTBR/TNFRSF3. May play a specific role in immune response regulation. Provides the membrane anchor for the attachment of the heterotrimeric complex to the cell surface. This is Lymphotoxin-beta (LTB) from Notamacropus eugenii (Tammar wallaby).